Consider the following 144-residue polypeptide: Large ribosomal subunit protein uL15 (144 aa).

Residues 24–52 (GSGLGKTAGRGHKGLKSRSGGSVRPGFEG) form a disordered region.

This sequence belongs to the universal ribosomal protein uL15 family. As to quaternary structure, part of the 50S ribosomal subunit.

In terms of biological role, binds to the 23S rRNA. The protein is Large ribosomal subunit protein uL15 of Cellvibrio japonicus (strain Ueda107) (Pseudomonas fluorescens subsp. cellulosa).